Reading from the N-terminus, the 226-residue chain is uncharacterized protein (226 aa).

The signal sequence occupies residues 1–18; sequence MRRIGLCISLLVTVLVMS.

This is an uncharacterized protein from Bacillus subtilis (strain 168).